Here is a 643-residue protein sequence, read N- to C-terminus: NADH-ubiquinone oxidoreductase chain 5 (643 aa).

Helical transmembrane passes span isoleucine 7 to phenylalanine 27, leucine 64 to isoleucine 84, threonine 114 to methionine 134, proline 140 to threonine 160, isoleucine 163 to tryptophan 183, isoleucine 208 to phenylalanine 228, isoleucine 230 to glycine 250, serine 277 to cysteine 297, phenylalanine 301 to isoleucine 321, leucine 338 to cysteine 358, alanine 398 to tyrosine 418, isoleucine 437 to phenylalanine 457, alanine 486 to isoleucine 506, valine 511 to leucine 531, phenylalanine 555 to leucine 575, and tyrosine 615 to serine 635.

This sequence belongs to the complex I subunit 5 family.

It localises to the mitochondrion inner membrane. The enzyme catalyses a ubiquinone + NADH + 5 H(+)(in) = a ubiquinol + NAD(+) + 4 H(+)(out). Core subunit of the mitochondrial membrane respiratory chain NADH dehydrogenase (Complex I) that is believed to belong to the minimal assembly required for catalysis. Complex I functions in the transfer of electrons from NADH to the respiratory chain. The immediate electron acceptor for the enzyme is believed to be ubiquinone. This chain is NADH-ubiquinone oxidoreductase chain 5 (ND5), found in Patiria pectinifera (Starfish).